The chain runs to 61 residues: UPF0370 protein SG1720 (61 aa).

A helical transmembrane segment spans residues 3–23; that stretch reads WLADYWWVVLLVLAGMLIGGV. Positions 37–47 are enriched in basic and acidic residues; the sequence is NRPELPPHRDN. A disordered region spans residues 37 to 61; that stretch reads NRPELPPHRDNNAQWDEEDDWPKKP. Residues 51–61 are compositionally biased toward acidic residues; the sequence is WDEEDDWPKKP.

It belongs to the UPF0370 family.

It localises to the cell membrane. This Sodalis glossinidius (strain morsitans) protein is UPF0370 protein SG1720.